The chain runs to 328 residues: Malate dehydrogenase (328 aa).

Gly12–Gly18 is an NAD(+) binding site. Arg95 and Arg101 together coordinate substrate. NAD(+) is bound by residues Asn108, Gln115, and Val132–Asn134. Positions 134 and 165 each coordinate substrate. The Proton acceptor role is filled by His190.

This sequence belongs to the LDH/MDH superfamily. MDH type 2 family.

The enzyme catalyses (S)-malate + NAD(+) = oxaloacetate + NADH + H(+). Functionally, catalyzes the reversible oxidation of malate to oxaloacetate. The polypeptide is Malate dehydrogenase (Polaromonas sp. (strain JS666 / ATCC BAA-500)).